The sequence spans 322 residues: Phosphatidylserine decarboxylase proenzyme (322 aa).

Catalysis depends on charge relay system; for autoendoproteolytic cleavage activity residues D90, H147, and S254. S254 (schiff-base intermediate with substrate; via pyruvic acid; for decarboxylase activity) is an active-site residue. S254 is subject to Pyruvic acid (Ser); by autocatalysis. Positions 290–322 (FVTPDSEPAPLPAEEIEAEHDASPLVDDKKDQV) are disordered. A compositionally biased stretch (basic and acidic residues) spans 308–322 (EHDASPLVDDKKDQV).

Belongs to the phosphatidylserine decarboxylase family. PSD-B subfamily. Prokaryotic type I sub-subfamily. In terms of assembly, heterodimer of a large membrane-associated beta subunit and a small pyruvoyl-containing alpha subunit. Pyruvate serves as cofactor. Is synthesized initially as an inactive proenzyme. Formation of the active enzyme involves a self-maturation process in which the active site pyruvoyl group is generated from an internal serine residue via an autocatalytic post-translational modification. Two non-identical subunits are generated from the proenzyme in this reaction, and the pyruvate is formed at the N-terminus of the alpha chain, which is derived from the carboxyl end of the proenzyme. The autoendoproteolytic cleavage occurs by a canonical serine protease mechanism, in which the side chain hydroxyl group of the serine supplies its oxygen atom to form the C-terminus of the beta chain, while the remainder of the serine residue undergoes an oxidative deamination to produce ammonia and the pyruvoyl prosthetic group on the alpha chain. During this reaction, the Ser that is part of the protease active site of the proenzyme becomes the pyruvoyl prosthetic group, which constitutes an essential element of the active site of the mature decarboxylase.

Its subcellular location is the cell membrane. The catalysed reaction is a 1,2-diacyl-sn-glycero-3-phospho-L-serine + H(+) = a 1,2-diacyl-sn-glycero-3-phosphoethanolamine + CO2. It participates in phospholipid metabolism; phosphatidylethanolamine biosynthesis; phosphatidylethanolamine from CDP-diacylglycerol: step 2/2. Catalyzes the formation of phosphatidylethanolamine (PtdEtn) from phosphatidylserine (PtdSer). The polypeptide is Phosphatidylserine decarboxylase proenzyme (Escherichia fergusonii (strain ATCC 35469 / DSM 13698 / CCUG 18766 / IAM 14443 / JCM 21226 / LMG 7866 / NBRC 102419 / NCTC 12128 / CDC 0568-73)).